A 401-amino-acid chain; its full sequence is Nicotinate phosphoribosyltransferase (401 aa).

Position 224 is a phosphohistidine; by autocatalysis (H224).

This sequence belongs to the NAPRTase family. Transiently phosphorylated on a His residue during the reaction cycle. Phosphorylation strongly increases the affinity for substrates and increases the rate of nicotinate D-ribonucleotide production. Dephosphorylation regenerates the low-affinity form of the enzyme, leading to product release.

It catalyses the reaction nicotinate + 5-phospho-alpha-D-ribose 1-diphosphate + ATP + H2O = nicotinate beta-D-ribonucleotide + ADP + phosphate + diphosphate. The protein operates within cofactor biosynthesis; NAD(+) biosynthesis; nicotinate D-ribonucleotide from nicotinate: step 1/1. In terms of biological role, catalyzes the synthesis of beta-nicotinate D-ribonucleotide from nicotinate and 5-phospho-D-ribose 1-phosphate at the expense of ATP. The protein is Nicotinate phosphoribosyltransferase of Pseudomonas putida (strain GB-1).